A 370-amino-acid chain; its full sequence is MEWPINKPIYDINKSWEDNLENGPFIEGYKKVDRNDNKDPSKYIDFLGQKLASPIGVPAGPLLNSQWVKFALEAGFDLPTYKTIRSHEHFGHPVPNVMYLDLESEDKQFTKSDSGSTLHATQTIPTTMDQLAITNSFGMPSMGKEYLYKDIALAHSYLGSGQSMIVSITGTASSAHDFLQDFVDTVRIACDAGAKMVEVNYSCPNVVTGEGQIYHNPDAVYEISSTLVKELSSKNIPLIIKVGVMDDLEKMERLFQQAERAGVAAIAGINTLSMKVTDKITGEPSLGASRLTSGVCGAPIRSAALDWVSTASSIIKKQNSKLKLLGCGGIVKPEHFDDFLNSGADIAMSATGLMWDPYIAMKWHNNNKNN.

Substrate contacts are provided by residues Lys82, 135-139 (NSFGM), and Asn200. Position 82-83 (82-83 (KT)) interacts with FMN. Asn200 is an FMN binding site. Cys203 functions as the Nucleophile in the catalytic mechanism. Positions 241 and 269 each coordinate FMN. A substrate-binding site is contributed by 270-271 (NT). FMN contacts are provided by residues Gly297, 328 to 329 (GG), and 350 to 351 (AT).

It belongs to the dihydroorotate dehydrogenase family. FMN serves as cofactor.

It carries out the reaction (S)-dihydroorotate + A = orotate + AH2. It functions in the pathway pyrimidine metabolism; UMP biosynthesis via de novo pathway. Functionally, catalyzes the conversion of dihydroorotate to orotate. Participates in the pyrimidine biosynthetic pathway. This chain is Dihydroorotate dehydrogenase (pyr4), found in Dictyostelium discoideum (Social amoeba).